The sequence spans 319 residues: Acetyl esterase (319 aa).

Residues histidine 91–glycine 93 carry the Involved in the stabilization of the negatively charged intermediate by the formation of the oxyanion hole motif. Catalysis depends on residues serine 165, aspartate 262, and histidine 292.

Belongs to the 'GDXG' lipolytic enzyme family. As to quaternary structure, homodimer. Interacts with MalT and MelA.

The protein localises to the cytoplasm. Functionally, displays esterase activity towards short chain fatty esters (acyl chain length of up to 8 carbons). Able to hydrolyze triacetylglycerol (triacetin) and tributyrylglycerol (tributyrin), but not trioleylglycerol (triolein) or cholesterol oleate. Negatively regulates MalT activity by antagonizing maltotriose binding. Inhibits MelA galactosidase activity. This chain is Acetyl esterase, found in Escherichia coli O6:H1 (strain CFT073 / ATCC 700928 / UPEC).